We begin with the raw amino-acid sequence, 235 residues long: Elongation factor Tu, chloroplastic (235 aa).

In terms of domain architecture, tr-type G spans 1–125; that stretch reads KNMITGAAQM…AVDEYIPTPV (125 aa). 47 to 50 serves as a coordination point for GTP; sequence NKQD.

It belongs to the TRAFAC class translation factor GTPase superfamily. Classic translation factor GTPase family. EF-Tu/EF-1A subfamily.

The protein localises to the plastid. The protein resides in the chloroplast. The enzyme catalyses GTP + H2O = GDP + phosphate + H(+). Its function is as follows. GTP hydrolase that promotes the GTP-dependent binding of aminoacyl-tRNA to the A-site of ribosomes during protein biosynthesis. This is Elongation factor Tu, chloroplastic (tufA) from Gracilariopsis lemaneiformis (Red alga).